A 136-amino-acid polypeptide reads, in one-letter code: Protein NrdI (136 aa).

The protein belongs to the NrdI family.

Probably involved in ribonucleotide reductase function. The protein is Protein NrdI of Citrobacter koseri (strain ATCC BAA-895 / CDC 4225-83 / SGSC4696).